We begin with the raw amino-acid sequence, 318 residues long: Mitochondrial thiamine pyrophosphate carrier (318 aa).

Solcar repeat units follow at residues 13–106 (NSKL…LTEL), 116–202 (HQFS…LKRA), and 214–309 (TGNL…FCNL). 5 consecutive transmembrane segments (helical) span residues 19 to 39 (AVAGSVSGFVTRALISPLDVI), 87 to 107 (ILSIGYGAVQFLAFEELTELL), 122 to 142 (FVCGGLSAGTATLTVHPVDVL), 173 to 193 (VFYKGLTPTVIAIFPYAGLQF), and 220 to 240 (LLCGCGSGVISKTFTYPLDLI). The Substrate recognition motif lies at 241 to 246 (KKRLQV). Residues 293–313 (ALSTGFMFFWYELFCNLFHCI) traverse the membrane as a helical segment.

It belongs to the mitochondrial carrier (TC 2.A.29) family.

The protein localises to the mitochondrion membrane. It carries out the reaction thiamine phosphate(out) + thiamine diphosphate(in) = thiamine phosphate(in) + thiamine diphosphate(out). Functionally, mitochondrial transporter mediating uptake of thiamine diphosphate into mitochondria. It is not clear if the antiporter activity is affected by the membrane potential or by the proton electrochemical gradient. The protein is Mitochondrial thiamine pyrophosphate carrier (Slc25a19) of Mus musculus (Mouse).